Here is a 307-residue protein sequence, read N- to C-terminus: MTTLLETPGYSEKLHDSIEKKLSEYGWGEEAASLADFVLVMLSNGKTQTEINEELVDLIGSDFDTSFSLWLFNQIEELEKSKNASVESVSKIDEIDFIEKESTDKSQQSFSVPETSIQPQSSQTPNITSLREEKELPTGRVGQKLKLTSQKQRFNPMAASFNYSKSVMPAAKRALTQTQEVPLCKYADKCSRANCIFAHPTPAAAPGEGMVLSSEMCASGKECKAADCVKGHPSPATVTTLPPFMSMSTIPIPCKYKPCLNPACRFIHPTKSRNMTWRPPSKTEETSLSERSFAVNESEEQLHVPSV.

Residues 102–135 form a disordered region; the sequence is STDKSQQSFSVPETSIQPQSSQTPNITSLREEKE. Positions 105 to 129 are enriched in polar residues; it reads KSQQSFSVPETSIQPQSSQTPNITS. 3 consecutive C3H1-type zinc fingers follow at residues 178–202, 217–232, and 254–268; these read TQEV…HPTP, CASG…VKGH, and CKYK…RFIH. The disordered stretch occupies residues 274–307; that stretch reads NMTWRPPSKTEETSLSERSFAVNESEEQLHVPSV.

The protein belongs to the ZC3H14 family.

It localises to the nucleus. In terms of biological role, RNA-binding protein involved in RNA processing. Acts as a regulator of mRNA stability: binds to mRNAs and pre-mRNAs, preventing their degradation. Involved in the biogenesis of circular RNAs (circRNAs) which are produced by back-splicing circularization of pre-mRNAs. The chain is Nuclear polyadenylated RNA-binding protein nab2 from Schizosaccharomyces pombe (strain 972 / ATCC 24843) (Fission yeast).